A 307-amino-acid chain; its full sequence is Aspartate carbamoyltransferase catalytic subunit (307 aa).

Carbamoyl phosphate is bound by residues Arg49 and Thr50. Residue Lys77 coordinates L-aspartate. Positions 99, 127, and 130 each coordinate carbamoyl phosphate. Residues Arg160 and Arg211 each contribute to the L-aspartate site. The carbamoyl phosphate site is built by Ala250 and Pro251.

It belongs to the aspartate/ornithine carbamoyltransferase superfamily. ATCase family. As to quaternary structure, heterododecamer (2C3:3R2) of six catalytic PyrB chains organized as two trimers (C3), and six regulatory PyrI chains organized as three dimers (R2).

The enzyme catalyses carbamoyl phosphate + L-aspartate = N-carbamoyl-L-aspartate + phosphate + H(+). Its pathway is pyrimidine metabolism; UMP biosynthesis via de novo pathway; (S)-dihydroorotate from bicarbonate: step 2/3. Its function is as follows. Catalyzes the condensation of carbamoyl phosphate and aspartate to form carbamoyl aspartate and inorganic phosphate, the committed step in the de novo pyrimidine nucleotide biosynthesis pathway. This is Aspartate carbamoyltransferase catalytic subunit from Bacillus pumilus (strain SAFR-032).